Here is a 452-residue protein sequence, read N- to C-terminus: 51.5 kDa protein (452 aa).

Positions 1–126 (MIQSPPGSGK…KDTYDYMIEG (126 aa)) constitute a Helicase ATP-binding domain. The 157-residue stretch at 177-333 (DVVQEYVKHA…NIVQAKQCPD (157 aa)) folds into the Helicase C-terminal domain. Residues 331–348 (CPDCSAMWPLSQKMCNLC) fold into a zinc finger.

In terms of biological role, may play a role in either regulating bacteriophages replication or specifying expression of its own genes. In Lactococcus (lactic streptococci), this protein is 51.5 kDa protein.